Here is a 115-residue protein sequence, read N- to C-terminus: MREVAEDIEEIRRRKLLELQRKYLEQQKAQEEEARQQALIEAQIQAILRKILTPEARERLARVRLVRPELARQVELILVQLYQAGQITERIDDAKLKKILAQIEARTRREFRIKW.

The protein belongs to the PDCD5 family.

The polypeptide is DNA-binding protein PYRAB09250 (Pyrococcus abyssi (strain GE5 / Orsay)).